Consider the following 121-residue polypeptide: Large ribosomal subunit protein uL14 (121 aa).

This sequence belongs to the universal ribosomal protein uL14 family. In terms of assembly, part of the 50S ribosomal subunit. Forms a cluster with proteins L3 and L19. In the 70S ribosome, L14 and L19 interact and together make contacts with the 16S rRNA in bridges B5 and B8.

Its function is as follows. Binds to 23S rRNA. Forms part of two intersubunit bridges in the 70S ribosome. This chain is Large ribosomal subunit protein uL14, found in Legionella pneumophila (strain Corby).